Consider the following 210-residue polypeptide: PEP-dependent dihydroxyacetone kinase, ADP-binding subunit DhaL (210 aa).

The DhaL domain occupies 6–206 (TQIVNWLTRC…VMFMMQMLAL (201 aa)). Mg(2+) is bound by residues aspartate 30, aspartate 35, and aspartate 37. Residues 38–41 (HGLN), 79–80 (AS), glycine 121, methionine 130, arginine 178, and 191–193 (DPG) each bind ADP.

As to quaternary structure, homodimer. The dihydroxyacetone kinase complex is composed of a homodimer of DhaM, a homodimer of DhaK and the subunit DhaL. DhaL also forms a complex with DhaR. Requires Mg(2+) as cofactor.

It localises to the cytoplasm. It catalyses the reaction dihydroxyacetone + phosphoenolpyruvate = dihydroxyacetone phosphate + pyruvate. Its pathway is polyol metabolism; glycerol degradation. ADP-binding subunit of the dihydroxyacetone kinase, which is responsible for the phosphoenolpyruvate (PEP)-dependent phosphorylation of dihydroxyacetone. DhaL-ADP is converted to DhaL-ATP via a phosphoryl group transfer from DhaM and transmits it to dihydroxyacetone bound to DhaK. DhaL also acts as coactivator of the transcription activator DhaR by binding to the sensor domain of DhaR. In the presence of dihydroxyacetone, DhaL-ADP displaces DhaK and stimulates DhaR activity. In the absence of dihydroxyacetone, DhaL-ADP is converted by the PTS to DhaL-ATP, which does not bind to DhaR. This is PEP-dependent dihydroxyacetone kinase, ADP-binding subunit DhaL from Escherichia coli (strain K12).